We begin with the raw amino-acid sequence, 259 residues long: Cytochrome c oxidase subunit 3 (259 aa).

Helical transmembrane passes span 13-33 (PWPL…ASWF), 36-56 (HGFL…IQWW), 80-100 (GMIL…WAFF), 125-145 (FSVP…VTWA), 160-180 (ALIL…GEYM), 195-215 (FFVA…FLAI), and 237-257 (AWYW…IYWW).

Belongs to the cytochrome c oxidase subunit 3 family. In terms of assembly, component of the cytochrome c oxidase (complex IV, CIV), a multisubunit enzyme composed of a catalytic core of 3 subunits and several supernumerary subunits. The complex exists as a monomer or a dimer and forms supercomplexes (SCs) in the inner mitochondrial membrane with ubiquinol-cytochrome c oxidoreductase (cytochrome b-c1 complex, complex III, CIII).

It localises to the mitochondrion inner membrane. It catalyses the reaction 4 Fe(II)-[cytochrome c] + O2 + 8 H(+)(in) = 4 Fe(III)-[cytochrome c] + 2 H2O + 4 H(+)(out). Functionally, component of the cytochrome c oxidase, the last enzyme in the mitochondrial electron transport chain which drives oxidative phosphorylation. The respiratory chain contains 3 multisubunit complexes succinate dehydrogenase (complex II, CII), ubiquinol-cytochrome c oxidoreductase (cytochrome b-c1 complex, complex III, CIII) and cytochrome c oxidase (complex IV, CIV), that cooperate to transfer electrons derived from NADH and succinate to molecular oxygen, creating an electrochemical gradient over the inner membrane that drives transmembrane transport and the ATP synthase. Cytochrome c oxidase is the component of the respiratory chain that catalyzes the reduction of oxygen to water. Electrons originating from reduced cytochrome c in the intermembrane space (IMS) are transferred via the dinuclear copper A center (CU(A)) of subunit 2 and heme A of subunit 1 to the active site in subunit 1, a binuclear center (BNC) formed by heme A3 and copper B (CU(B)). The BNC reduces molecular oxygen to 2 water molecules using 4 electrons from cytochrome c in the IMS and 4 protons from the mitochondrial matrix. The sequence is that of Cytochrome c oxidase subunit 3 (COIII) from Lumbricus terrestris (Common earthworm).